The sequence spans 158 residues: Peptide methionine sulfoxide reductase MsrA (158 aa).

The active site involves Cys-10.

Belongs to the MsrA Met sulfoxide reductase family.

The catalysed reaction is L-methionyl-[protein] + [thioredoxin]-disulfide + H2O = L-methionyl-(S)-S-oxide-[protein] + [thioredoxin]-dithiol. It carries out the reaction [thioredoxin]-disulfide + L-methionine + H2O = L-methionine (S)-S-oxide + [thioredoxin]-dithiol. In terms of biological role, has an important function as a repair enzyme for proteins that have been inactivated by oxidation. Catalyzes the reversible oxidation-reduction of methionine sulfoxide in proteins to methionine. The chain is Peptide methionine sulfoxide reductase MsrA from Alkaliphilus metalliredigens (strain QYMF).